The chain runs to 215 residues: Large ribosomal subunit protein eL14 (215 aa).

At Lys79 the chain carries N6-acetyllysine. Lys85 carries the post-translational modification N6-acetyllysine; alternate. Lys85 carries the post-translational modification N6-succinyllysine; alternate. Lys124 participates in a covalent cross-link: Glycyl lysine isopeptide (Lys-Gly) (interchain with G-Cter in SUMO2). Ser139 carries the phosphoserine modification. The tract at residues 161-215 is disordered; sequence VPAKKITAASKKAPAQKVPAQKATGQKAAPAPKAQKGQKAPAQKAPAPKASGKKA. Repeat copies occupy residues 171–175, 176–180, 181–185, 186–190, 193–195, and 196–198. Positions 171 to 190 are 4 X 5 AA tandem repeats of Q-K-A-[PAS]-X; sequence KKAPAQKVPAQKATGQKAAP. The 2 X 3 AA tandem repeats of K-[GA]-Q stretch occupies residues 193-198; that stretch reads KAQKGQ. At Lys204 the chain carries N6-succinyllysine.

The protein belongs to the eukaryotic ribosomal protein eL14 family. Component of the large ribosomal subunit.

It localises to the cytoplasm. Component of the large ribosomal subunit. The ribosome is a large ribonucleoprotein complex responsible for the synthesis of proteins in the cell. In Homo sapiens (Human), this protein is Large ribosomal subunit protein eL14 (RPL14).